The primary structure comprises 342 residues: Elongation factor Ts (342 aa).

The segment at 79 to 82 (TDFV) is involved in Mg(2+) ion dislocation from EF-Tu.

It belongs to the EF-Ts family.

The protein resides in the cytoplasm. Functionally, associates with the EF-Tu.GDP complex and induces the exchange of GDP to GTP. It remains bound to the aminoacyl-tRNA.EF-Tu.GTP complex up to the GTP hydrolysis stage on the ribosome. The chain is Elongation factor Ts from Lactococcus lactis subsp. cremoris (strain MG1363).